The following is a 103-amino-acid chain: Flagellar hook-basal body complex protein FliE (103 aa).

The protein belongs to the FliE family.

The protein resides in the bacterial flagellum basal body. The chain is Flagellar hook-basal body complex protein FliE from Yersinia pestis.